A 595-amino-acid polypeptide reads, in one-letter code: ATP-dependent lipid A-core flippase (595 aa).

A disordered region spans residues 1–20; sequence MSQAYQPDSTKTSAKKSSAV. Low complexity predominate over residues 9–19; sequence STKTSAKKSSA. 4 helical membrane-spanning segments follow: residues 41–61, 81–101, 169–189, and 266–286; these read WWAILLTITGFAINAGTEIWI, GLFPFIIVMLFFVRGVGSFLG, VIALMGFLLYSNWRLTLILFV, and INTPAVQLLMAVAMAVVVWLA. In terms of domain architecture, ABC transmembrane type-1 spans 45-326; it reads LLTITGFAIN…LTDVNQQLQR (282 aa). The region spanning 357-592 is the ABC transporter domain; it reads IKLDNISLVY…HGHYAQMYAR (236 aa). 390-397 lines the ATP pocket; that stretch reads GRSGAGKS.

The protein belongs to the ABC transporter superfamily. Lipid exporter (TC 3.A.1.106) family. Homodimer.

Its subcellular location is the cell inner membrane. It carries out the reaction ATP + H2O + lipid A-core oligosaccharideSide 1 = ADP + phosphate + lipid A-core oligosaccharideSide 2.. Its function is as follows. Involved in lipopolysaccharide (LPS) biosynthesis. Translocates lipid A-core from the inner to the outer leaflet of the inner membrane. Transmembrane domains (TMD) form a pore in the inner membrane and the ATP-binding domain (NBD) is responsible for energy generation. The polypeptide is ATP-dependent lipid A-core flippase (Psychrobacter arcticus (strain DSM 17307 / VKM B-2377 / 273-4)).